Here is a 77-residue protein sequence, read N- to C-terminus: MSEKLQKIQALIVEQLGVDEEEVTPEASFVDDLGADSLDLVELVMAFEEAFEIRIPDEDAEKIRTVGDAVAYIEERS.

In terms of domain architecture, Carrier spans 2–77; sequence SEKLQKIQAL…DAVAYIEERS (76 aa). An O-(pantetheine 4'-phosphoryl)serine modification is found at serine 37.

The protein belongs to the acyl carrier protein (ACP) family. In terms of processing, 4'-phosphopantetheine is transferred from CoA to a specific serine of apo-ACP by AcpS. This modification is essential for activity because fatty acids are bound in thioester linkage to the sulfhydryl of the prosthetic group.

The protein localises to the cytoplasm. It participates in lipid metabolism; fatty acid biosynthesis. Carrier of the growing fatty acid chain in fatty acid biosynthesis. This Desulforudis audaxviator (strain MP104C) protein is Acyl carrier protein.